A 432-amino-acid polypeptide reads, in one-letter code: Serine/threonine-protein kinase stk11 (432 aa).

A Protein kinase domain is found at 52–312 (YLMGDLLGEG…IQQIRQHNWF (261 aa)). Residues 58 to 66 (LGEGSYGKV) and Lys-81 contribute to the ATP site. Asp-179 (proton acceptor) is an active-site residue. At Thr-192 the chain carries Phosphothreonine; by autocatalysis. Positions 398–432 (TESQLKTERRVSSSSQRKASTTGSKVRKLSACKQQ) are disordered. Residues 409–421 (SSSSQRKASTTGS) show a composition bias toward polar residues. Over residues 422 to 432 (KVRKLSACKQQ) the composition is skewed to basic residues. At Ser-427 the chain carries Phosphoserine; by PKA.

The protein belongs to the protein kinase superfamily. CAMK Ser/Thr protein kinase family. LKB1 subfamily. As to quaternary structure, catalytic component of a trimeric complex composed of STK11/LKB1, STRAD (STRADA or STRADB) and CAB39/MO25 (CAB39/MO25alpha or CAB39L/MO25beta). Requires Mg(2+) as cofactor. It depends on Mn(2+) as a cofactor. Phosphorylated by a cAMP-dependent protein kinase. Autophosphorylated in a reaction that prefers Mn(2+) to Mg(2+). In terms of tissue distribution, oocytes, eggs and early embryos.

The protein resides in the nucleus. Its subcellular location is the cytoplasm. It catalyses the reaction L-seryl-[protein] + ATP = O-phospho-L-seryl-[protein] + ADP + H(+). It carries out the reaction L-threonyl-[protein] + ATP = O-phospho-L-threonyl-[protein] + ADP + H(+). Its function is as follows. Tumor suppressor serine/threonine-protein kinase that controls the activity of AMP-activated protein kinase (AMPK) family members, thereby playing a role in various processes such as cell metabolism, cell polarity, apoptosis and DNA damage response. Acts by phosphorylating the T-loop of AMPK family proteins, leading to promote their activity. In Xenopus laevis (African clawed frog), this protein is Serine/threonine-protein kinase stk11.